Here is a 330-residue protein sequence, read N- to C-terminus: Probable xanthine dehydrogenase subunit A (330 aa).

As to quaternary structure, could be composed of four subunits: PucA, PucC, PucD and PucE.

It carries out the reaction xanthine + NAD(+) + H2O = urate + NADH + H(+). The catalysed reaction is hypoxanthine + NAD(+) + H2O = xanthine + NADH + H(+). It functions in the pathway purine metabolism; hypoxanthine degradation; urate from hypoxanthine: step 1/2. It participates in purine metabolism; hypoxanthine degradation; urate from hypoxanthine: step 2/2. Its function is as follows. Oxidizes hypoxanthine and xanthine to uric acid. PucA subunit could exert a molybdenum cofactor recruiting function. This Bacillus subtilis (strain 168) protein is Probable xanthine dehydrogenase subunit A (pucA).